A 161-amino-acid chain; its full sequence is MQANSRTYFLLIAIVSFAMVGAALYMQYAENLQPCPLCIMQRFAFIGIGIFSLLAVIAQNTRTLWQGLGMLSGVGGIAVAGYQVALLMNPKASCGIDPLENWVNSLPTAKLLPQVFYSDGLCTAPTPPILGLSIPAWSLIWLLILTLTLAVGLIRREKHFR.

The Cytoplasmic segment spans residues 1-8 (MQANSRTY). A helical membrane pass occupies residues 9-25 (FLLIAIVSFAMVGAALY). Residues 26–43 (MQYAENLQPCPLCIMQRF) are Periplasmic-facing. C35 and C38 are disulfide-bonded. A helical membrane pass occupies residues 44-58 (AFIGIGIFSLLAVIA). The Cytoplasmic segment spans residues 59–63 (QNTRT). The chain crosses the membrane as a helical span at residues 64-81 (LWQGLGMLSGVGGIAVAG). At 82 to 136 (YQVALLMNPKASCGIDPLENWVNSLPTAKLLPQVFYSDGLCTAPTPPILGLSIPA) the chain is on the periplasmic side. A disulfide bond links C94 and C122. Residues 137–155 (WSLIWLLILTLTLAVGLIR) traverse the membrane as a helical segment. The Cytoplasmic segment spans residues 156–161 (REKHFR).

The protein belongs to the DsbB family.

It localises to the cell inner membrane. In terms of biological role, required for disulfide bond formation in some periplasmic proteins. Acts by oxidizing the DsbA protein. This chain is Disulfide bond formation protein B, found in Cupriavidus metallidurans (strain ATCC 43123 / DSM 2839 / NBRC 102507 / CH34) (Ralstonia metallidurans).